The primary structure comprises 351 residues: MTIAVGRAPSRGWFDVLDDWLKRDRFVFVGWSGILLFPCAFLALGGWLTGTTFVTSWYTHGLASSYLEGANFLTVAVSSPADSMGHSLLLLWGPEAQGDLTRWFQLGGLWPFVALHGAFGLIGFMLRQFEIARLVGIRPYNALAFSAPIAVFVSVFLMYPLGQSSWFFAPSFGVAAIFRFLLFLQGFHNWTLNPFHMMGVAGVLGGALLCAIHGATVENTLFEDGEGANTFRAFNPTQSEETYSMVTANRFWSQIFGIAFSNKRWLHFFMLFVPVTGLWMSAVGIVGLALNLRAYDFVSQELRAAEDPEFETFYTKNILLNEGIRAWMAPQDQPHEKFVFPEEVLPRGNAL.

A helical membrane pass occupies residues 39-59; it reads CAFLALGGWLTGTTFVTSWYT. Histidine 116 is a binding site for chlorophyll a. A helical transmembrane segment spans residues 123-139; it reads GFMLRQFEIARLVGIRP. Pheophytin a-binding residues include glutamine 128 and asparagine 141. Residues 151–164 traverse the membrane as a helical segment; that stretch reads VFVSVFLMYPLGQS. Histidine 196 contacts chlorophyll a. The helical transmembrane segment at 206 to 226 threads the bilayer; sequence GALLCAIHGATVENTLFEDGE. Residues histidine 213 and phenylalanine 260 each contribute to the a plastoquinone site. Histidine 213 is a binding site for Fe cation. Residue histidine 267 participates in Fe cation binding. A helical transmembrane segment spans residues 277–293; that stretch reads GLWMSAVGIVGLALNLR.

This sequence belongs to the reaction center PufL/M/PsbA/D family. PSII is composed of 1 copy each of membrane proteins PsbA, PsbB, PsbC, PsbD, PsbE, PsbF, PsbH, PsbI, PsbJ, PsbK, PsbL, PsbM, PsbT, PsbX, PsbY, PsbZ, Psb30/Ycf12, peripheral proteins PsbO, CyanoQ (PsbQ), PsbU, PsbV and a large number of cofactors. It forms dimeric complexes. The D1/D2 heterodimer binds P680, chlorophylls that are the primary electron donor of PSII, and subsequent electron acceptors. It shares a non-heme iron and each subunit binds pheophytin, quinone, additional chlorophylls, carotenoids and lipids. There is also a Cl(-1) ion associated with D1 and D2, which is required for oxygen evolution. The PSII complex binds additional chlorophylls, carotenoids and specific lipids. is required as a cofactor.

The protein localises to the cellular thylakoid membrane. The catalysed reaction is 2 a plastoquinone + 4 hnu + 2 H2O = 2 a plastoquinol + O2. Its function is as follows. Photosystem II (PSII) is a light-driven water:plastoquinone oxidoreductase that uses light energy to abstract electrons from H(2)O, generating O(2) and a proton gradient subsequently used for ATP formation. It consists of a core antenna complex that captures photons, and an electron transfer chain that converts photonic excitation into a charge separation. The D1/D2 (PsbA/PsbD) reaction center heterodimer binds P680, the primary electron donor of PSII as well as several subsequent electron acceptors. D2 is needed for assembly of a stable PSII complex. The chain is Photosystem II D2 protein from Nostoc sp. (strain PCC 7120 / SAG 25.82 / UTEX 2576).